The sequence spans 1693 residues: 1-phosphatidylinositol 4,5-bisphosphate phosphodiesterase eta-1 (1693 aa).

The region spanning 20-128 (SVMQSGTQMI…WITGLKYLMA (109 aa)) is the PH domain. EF-hand domains follow at residues 142 to 177 (THDQWVKQTFEEADKNGDGLLNIEEIHQLMHKLNVN), 178 to 214 (LPRRKVRQMFQEADTDENQGTLTFEEFCVFYKMMSLR), and 226 to 246 (DKKDHLTVEELAQFLKVEQKM). 4 residues coordinate Ca(2+): Asp155, Asn157, Asp159, and Glu166. In terms of domain architecture, PI-PLC X-box spans 299–444 (QDMDQPLCNY…LKGKILVKGK (146 aa)). His314 is an active-site residue. Ca(2+) is bound by residues Asn315, Glu344, and Asp346. The active site involves His358. Glu393 is a binding site for Ca(2+). Substrate is bound by residues Lys442 and Lys444. Positions 526–585 (LNAHLKQSPDVKESGKKSHGRSLMTNFGKHKKTTKSRSKSYSTDDEEDTQQSTGKEGGQL) are disordered. Positions 532–541 (QSPDVKESGK) are enriched in basic and acidic residues. Residues 553 to 563 (GKHKKTTKSRS) are compositionally biased toward basic residues. A PI-PLC Y-box domain is found at 601–714 (LSDLVVYTNS…GYVLKPQQMC (114 aa)). Substrate-binding residues include Ser627 and Arg654. Residues 715-843 (KGTFNPFSGD…PGYRHVYLEG (129 aa)) form the C2 domain. 6 residues coordinate Ca(2+): Ile758, Asp760, Asp784, Asp813, His814, and Asp815. The segment covering 992–1005 (IEGKENSLAEDKDG) has biased composition (basic and acidic residues). 4 disordered regions span residues 992-1014 (IEGKENSLAEDKDGRRKGKASIK), 1052-1089 (TGEQLGMSSPRGGRTTSNATSNCQENPCPSKSLSPKQH), 1300-1329 (LESNLPGSPNTSRGWLPKSPTKGEDWETLK), and 1578-1613 (LSSRSQSRVRNIASRAKEKQEANKQKVPNPSNGAGV). Over residues 1065 to 1086 (RTTSNATSNCQENPCPSKSLSP) the composition is skewed to polar residues. A compositionally biased stretch (basic and acidic residues) spans 1592 to 1601 (RAKEKQEANK).

Requires Ca(2+) as cofactor. Expressed in brain and to a lower extent in lung. In brain, it is found in cerebrum, cerebellum and spinal cord. In embryo expressed in the notochord, developing spinal cord (in a ventral to dorsal gradient), dorsal root ganglia, cerebellum and dermatomyosome.

Its subcellular location is the cytoplasm. It is found in the membrane. It carries out the reaction a 1,2-diacyl-sn-glycero-3-phospho-(1D-myo-inositol-4,5-bisphosphate) + H2O = 1D-myo-inositol 1,4,5-trisphosphate + a 1,2-diacyl-sn-glycerol + H(+). The production of the second messenger molecules diacylglycerol (DAG) and inositol 1,4,5-trisphosphate (IP3) is mediated by calcium-activated phosphatidylinositol-specific phospholipase C enzymes. The polypeptide is 1-phosphatidylinositol 4,5-bisphosphate phosphodiesterase eta-1 (Homo sapiens (Human)).